A 366-amino-acid chain; its full sequence is Ferrochelatase (366 aa).

Residues H210 and E293 each coordinate Fe cation.

It belongs to the ferrochelatase family.

It is found in the cytoplasm. The catalysed reaction is heme b + 2 H(+) = protoporphyrin IX + Fe(2+). It functions in the pathway porphyrin-containing compound metabolism; protoheme biosynthesis; protoheme from protoporphyrin-IX: step 1/1. In terms of biological role, catalyzes the ferrous insertion into protoporphyrin IX. The polypeptide is Ferrochelatase (Leptospira borgpetersenii serovar Hardjo-bovis (strain L550)).